A 320-amino-acid polypeptide reads, in one-letter code: Protein MRH1 (320 aa).

Topologically, residues 1 to 34 (MSTFETLIKRGGNEAIKINPPTGADFHITSRGSD) are extracellular. A helical transmembrane segment spans residues 35–55 (WFWTCFCCYLLFGLILTFLMF). Over 56 to 62 (RKPVNDR) the chain is Cytoplasmic. Residues 63–83 (FFYLTGIAPNFFMCIAYFTMA) traverse the membrane as a helical segment. Topologically, residues 84-116 (SNLGWIPVKAKYNHVQTSTQKEHPGYRQIFYSR) are extracellular. A helical transmembrane segment spans residues 117 to 137 (FVGWFLALPWPIIQICMLAGT). Topologically, residues 138–141 (PFWQ) are cytoplasmic. Residues 142 to 162 (MAFNVCITEFFTVCWLIAACV) form a helical membrane-spanning segment. Residues 163-167 (HSTYK) are Extracellular-facing. A helical membrane pass occupies residues 168–188 (WGYYTIGLGAAIVVSISVMTT). The Cytoplasmic portion of the chain corresponds to 189 to 204 (SYNLVKQRDNDIRLTF). The chain crosses the membrane as a helical span at residues 205-225 (LVFFSIIMFLWIIAYPTCFGI). Residues 226-238 (TDGGNVLQPDSAG) are Extracellular-facing. A helical membrane pass occupies residues 239-259 (IFYGIIDLILMCFIPTLLVPI). The Cytoplasmic segment spans residues 260–320 (ANHFGADKLG…KSKKSKKSEE (61 aa)). Residues 285–320 (APVASPRPAATPNLSKDKKKKSKKSKKSKKSKKSEE) form a disordered region. Residue serine 289 is modified to Phosphoserine. The residue at position 295 (threonine 295) is a Phosphothreonine. Serine 299 carries the phosphoserine modification. The segment covering 301–320 (DKKKKSKKSKKSKKSKKSEE) has biased composition (basic residues).

The protein belongs to the archaeal/bacterial/fungal opsin family.

The protein localises to the cell membrane. It is found in the mitochondrion. It localises to the bud. The sequence is that of Protein MRH1 (MRH1) from Saccharomyces cerevisiae (strain ATCC 204508 / S288c) (Baker's yeast).